The primary structure comprises 386 residues: 1-deoxy-D-xylulose 5-phosphate reductoisomerase (386 aa).

Thr13, Gly14, Ser15, Ile16, Asn40, and Asn122 together coordinate NADPH. Residue Lys123 coordinates 1-deoxy-D-xylulose 5-phosphate. Glu124 is an NADPH binding site. Asp148 contacts Mn(2+). Positions 149, 150, 177, and 201 each coordinate 1-deoxy-D-xylulose 5-phosphate. Glu150 is a Mn(2+) binding site. Gly207 is an NADPH binding site. 1-deoxy-D-xylulose 5-phosphate-binding residues include Ser214, Asn219, Lys220, and Glu223. Mn(2+) is bound at residue Glu223.

This sequence belongs to the DXR family. Mg(2+) serves as cofactor. Requires Mn(2+) as cofactor.

It carries out the reaction 2-C-methyl-D-erythritol 4-phosphate + NADP(+) = 1-deoxy-D-xylulose 5-phosphate + NADPH + H(+). It functions in the pathway isoprenoid biosynthesis; isopentenyl diphosphate biosynthesis via DXP pathway; isopentenyl diphosphate from 1-deoxy-D-xylulose 5-phosphate: step 1/6. Its function is as follows. Catalyzes the NADPH-dependent rearrangement and reduction of 1-deoxy-D-xylulose-5-phosphate (DXP) to 2-C-methyl-D-erythritol 4-phosphate (MEP). This is 1-deoxy-D-xylulose 5-phosphate reductoisomerase from Francisella tularensis subsp. holarctica (strain OSU18).